We begin with the raw amino-acid sequence, 539 residues long: Acid-sensing ion channel 4 (539 aa).

The Cytoplasmic segment spans residues 1 to 68 (MPIEIVCKIK…GPGPHGLRRT (68 aa)). Residues 69–89 (LWVLALLTSLAAFLYQAASLA) traverse the membrane as a helical segment. The Extracellular portion of the chain corresponds to 90 to 438 (RGYLTRPHLV…EQRAAYGLSA (349 aa)). 2 cysteine pairs are disulfide-bonded: Cys118-Cys202 and Cys180-Cys187. Residues Asn191, Asn243, Asn341, and Asn376 are each glycosylated (N-linked (GlcNAc...) asparagine). 5 disulfides stabilise this stretch: Cys296–Cys375, Cys318–Cys371, Cys322–Cys369, Cys331–Cys353, and Cys333–Cys345. The helical transmembrane segment at 439 to 459 (LLGDLGGQMGLFIGASILTLL) threads the bilayer. The GAS motif; ion selectivity filter motif lies at 452-454 (GAS). Over 460–539 (EILDYIYEVS…PGSLFEDFAC (80 aa)) the chain is Cytoplasmic. A disordered region spans residues 501–531 (EQSPCPNRGRAEGGGASNLLPNHHHPHGPPG).

It belongs to the amiloride-sensitive sodium channel (TC 1.A.6) family. ASIC4 subfamily. In terms of assembly, homotrimer. Heterotrimer; with other ASIC proteins producing functional channels. As to expression, expressed in brain, spinal cord and dorsal root ganglion (DRG). Expressed by a subset of sensory neurons in the DRG. Expressed by granule cells in the cerebellar cortex. In hippocampus, expression is detected in dentate gyrus granule cells, in pyramidal cells of CA1-CA3 subfields and in interneurons of the striatum oriens and radiatum of all subfields. In cerebral cortex expressed in small, medium and large pyramidal cells in layers 2, 3 and 5 respectively. Also expressed in striatum, globus pallidus, inferior and superior calliculi, amygdala, magnocellular preoptic nucleus, islands of Calleja and large neurons of olfactory tubercules.

Its subcellular location is the cell membrane. Functionally, does not exhibit measurable stand-alone pH-gated sodium channel activity but may form pH-gated heterotrimeric sodium channels. Its activity could also depend on alternative gating mechanisms. The chain is Acid-sensing ion channel 4 from Rattus norvegicus (Rat).